A 188-amino-acid polypeptide reads, in one-letter code: Proline-rich protein 3 (188 aa).

The tract at residues 1-157 is disordered; sequence MPKRKKQNQH…DPQVMEDKSD (157 aa). 2 stretches are compositionally biased toward pro residues: residues 35 to 46 and 69 to 82; these read IGPPSLLGPPPM and LIPP…PPWG. Residues 83–96 are compositionally biased toward low complexity; it reads RGPIRRGLGPRSSP. Residues 145–157 show a composition bias toward basic and acidic residues; that stretch reads PKDDPQVMEDKSD. The C3H1-type zinc-finger motif lies at 155–183; it reads KSDRPVCRHFAKKGHCRYEDLCAFYHPGV.

This Pan troglodytes (Chimpanzee) protein is Proline-rich protein 3 (PRR3).